Consider the following 136-residue polypeptide: Large ribosomal subunit protein uL16 (136 aa).

This sequence belongs to the universal ribosomal protein uL16 family. In terms of assembly, part of the 50S ribosomal subunit.

Binds 23S rRNA and is also seen to make contacts with the A and possibly P site tRNAs. The chain is Large ribosomal subunit protein uL16 from Citrobacter koseri (strain ATCC BAA-895 / CDC 4225-83 / SGSC4696).